The sequence spans 99 residues: Nucleoid-associated protein LCABL_24440 (99 aa).

This sequence belongs to the YbaB/EbfC family. Homodimer.

It localises to the cytoplasm. Its subcellular location is the nucleoid. Functionally, binds to DNA and alters its conformation. May be involved in regulation of gene expression, nucleoid organization and DNA protection. The protein is Nucleoid-associated protein LCABL_24440 of Lacticaseibacillus casei (strain BL23) (Lactobacillus casei).